The following is a 466-amino-acid chain: Glutamate--tRNA ligase 2 (466 aa).

Residues 9-19 carry the 'HIGH' region motif; sequence PSPTGSLHLGG. Positions 236-240 match the 'KMSKS' region motif; sequence KLSKR. Lys239 contacts ATP.

It belongs to the class-I aminoacyl-tRNA synthetase family. Glutamate--tRNA ligase type 1 subfamily. In terms of assembly, monomer.

The protein localises to the cytoplasm. It catalyses the reaction tRNA(Glu) + L-glutamate + ATP = L-glutamyl-tRNA(Glu) + AMP + diphosphate. In terms of biological role, catalyzes the attachment of glutamate to tRNA(Glu) in a two-step reaction: glutamate is first activated by ATP to form Glu-AMP and then transferred to the acceptor end of tRNA(Glu). The polypeptide is Glutamate--tRNA ligase 2 (Anaplasma marginale (strain St. Maries)).